Consider the following 165-residue polypeptide: Endoribonuclease YbeY (165 aa).

The Zn(2+) site is built by histidine 119, histidine 123, and histidine 129.

The protein belongs to the endoribonuclease YbeY family. Zn(2+) is required as a cofactor.

It localises to the cytoplasm. Its function is as follows. Single strand-specific metallo-endoribonuclease involved in late-stage 70S ribosome quality control and in maturation of the 3' terminus of the 16S rRNA. This Streptomyces coelicolor (strain ATCC BAA-471 / A3(2) / M145) protein is Endoribonuclease YbeY.